The chain runs to 149 residues: SsrA-binding protein (149 aa).

Belongs to the SmpB family.

It is found in the cytoplasm. Its function is as follows. Required for rescue of stalled ribosomes mediated by trans-translation. Binds to transfer-messenger RNA (tmRNA), required for stable association of tmRNA with ribosomes. tmRNA and SmpB together mimic tRNA shape, replacing the anticodon stem-loop with SmpB. tmRNA is encoded by the ssrA gene; the 2 termini fold to resemble tRNA(Ala) and it encodes a 'tag peptide', a short internal open reading frame. During trans-translation Ala-aminoacylated tmRNA acts like a tRNA, entering the A-site of stalled ribosomes, displacing the stalled mRNA. The ribosome then switches to translate the ORF on the tmRNA; the nascent peptide is terminated with the 'tag peptide' encoded by the tmRNA and targeted for degradation. The ribosome is freed to recommence translation, which seems to be the essential function of trans-translation. The protein is SsrA-binding protein of Wolbachia pipientis subsp. Culex pipiens (strain wPip).